Reading from the N-terminus, the 279-residue chain is Undecaprenyl-diphosphatase (279 aa).

Helical transmembrane passes span 2 to 22 (LFIE…TEWL), 44 to 64 (AFME…VIVI), 85 to 105 (WQLW…AVPL), 113 to 133 (FNHM…FLWI), 163 to 183 (VLSI…AIIL), 188 to 208 (TVAA…YSGL), 225 to 245 (LLVL…VIKL), and 255 to 275 (FTVF…YSVF).

Belongs to the UppP family.

The protein localises to the cell membrane. The enzyme catalyses di-trans,octa-cis-undecaprenyl diphosphate + H2O = di-trans,octa-cis-undecaprenyl phosphate + phosphate + H(+). In terms of biological role, catalyzes the dephosphorylation of undecaprenyl diphosphate (UPP). Confers resistance to bacitracin. The protein is Undecaprenyl-diphosphatase of Streptococcus equi subsp. zooepidemicus (strain H70).